The primary structure comprises 362 residues: Protein RecA (362 aa).

77-84 lines the ATP pocket; it reads GPESSGKT.

Belongs to the RecA family.

Its subcellular location is the cytoplasm. In terms of biological role, can catalyze the hydrolysis of ATP in the presence of single-stranded DNA, the ATP-dependent uptake of single-stranded DNA by duplex DNA, and the ATP-dependent hybridization of homologous single-stranded DNAs. It interacts with LexA causing its activation and leading to its autocatalytic cleavage. This Rhizobium etli (strain ATCC 51251 / DSM 11541 / JCM 21823 / NBRC 15573 / CFN 42) protein is Protein RecA.